A 231-amino-acid polypeptide reads, in one-letter code: Two-component response regulator ORR1 (231 aa).

The Response regulatory domain occupies 9–135 (RVLLVDDSPV…DVQRLRNCSP (127 aa)). Residue D68 is modified to 4-aspartylphosphate.

This sequence belongs to the ARR family. Type-A subfamily. In terms of processing, two-component system major event consists of a His-to-Asp phosphorelay between a sensor histidine kinase (HK) and a response regulator (RR). In plants, the His-to-Asp phosphorelay involves an additional intermediate named Histidine-containing phosphotransfer protein (HPt). This multistep phosphorelay consists of a His-Asp-His-Asp sequential transfer of a phosphate group between first a His and an Asp of the HK protein, followed by the transfer to a conserved His of the HPt protein and finally the transfer to an Asp in the receiver domain of the RR protein. As to expression, expressed in roots, leaf blades, leaf sheaths, shoot apex, flowers and panicles.

Its function is as follows. Functions as a response regulator involved in His-to-Asp phosphorelay signal transduction system. Phosphorylation of the Asp residue in the receiver domain activates the ability of the protein to promote the transcription of target genes. Type-A response regulators seem to act as negative regulators of the cytokinin signaling. Involved in adventitious (crown) root initiation under the regulation of CRL5. The chain is Two-component response regulator ORR1 from Oryza sativa subsp. japonica (Rice).